Here is a 597-residue protein sequence, read N- to C-terminus: MVGVPLQWFLKDDFDGKEILWNLFRELVYYRELKADYAYYCNRVSFFEDAAQGMRRLMYEAVFSREARDEIRVRAFVQHYCHTEVASLFYLFDAVYAFHYVRNRAPYYTTPEGSALLASLYQKERGVYWEHTETALHLQFAYALAERVLFHDMPKGCNRACIARDPVVQEVLRTLVLGTEMSNFIHSEFFPLSGEVVPTKHRDRIVSVFLLEHFVRLWHLSVANITFELKNITDRSYDPFRNERAFEYTKSNLHAVHSRDGQQELKKREDVFESCTTQFDERFSISPKERKEFARLLRTTHRLRIDMRSFWKSLIGKSVQWIDCYEGKCPKGRLNVGDFVSVFPDFQEFRGRDQRYKLRVYDRVYEVRACTLRPAQIEVSFVVDNSGSMNKEKIASAREALAVSMLSLKDFGEYSDMLAAGRRERTTIHSEVYYFGSSFIKVKSFGKSKSKDFNSAQLIKASVNLDGRFGGTNDAEVLKHILADVERRRARVSSDTSFVKVVLVITDGCSSYPHESRRTIEELRRRGVMIFGFQIGLMSPEETALFHDVWNSTEELGLLLGERLEYLPRELLRTLRVVLSKVHRLSSGERLHAQRVW.

Residues 378 to 575 (EVSFVVDNSG…YLPRELLRTL (198 aa)) enclose the VWFA domain.

This is an uncharacterized protein from Treponema pallidum (strain Nichols).